The chain runs to 118 residues: UPF0342 protein BPUM_0928 (118 aa).

Belongs to the UPF0342 family.

The sequence is that of UPF0342 protein BPUM_0928 from Bacillus pumilus (strain SAFR-032).